The primary structure comprises 467 residues: MSIGTIVQCIGAVVDIQFPRDAMPKVYDALVLQDSGEASFAEKGLSFEVQQQLGDGVVRTIALGSSDGLRRGMPVSNTGAPISVPVGHGTLGRIMDVLGRPIDEAGPIAADEKRAIHQKAPKFDELSPSVDLLETGIKVIDLVCPFAKGGKVGLFGGAGVGKTVNMMELINNIAKQHSGLSVFAGVGERTREGNDFYHEMKDSNVLDKVAMVFGQMNEPPGNRLRVALTGLTMAERFRDEGRDILFFVDNIYRYTLAGTEVSALLGRMPSAVGYQPTLAEEMGKLQERITSTKTGSITSIQAVYVPADDLTDPSPATTFLHLDSTVVLSRDIAALGIYPAVDPLDSTSRQLDPQIVGTEHYEVARRVQQTLQRYKELRDIIAILGMDELSPEDKLAVGRARKIQRFLSQPFHVAEVFTGSPGKYVPLKETIRGFKMLVDGECDHLPEQAFYMVGSIDEAFEKAKKLQ.

156–163 is an ATP binding site; that stretch reads GGAGVGKT.

This sequence belongs to the ATPase alpha/beta chains family. As to quaternary structure, F-type ATPases have 2 components, CF(1) - the catalytic core - and CF(0) - the membrane proton channel. CF(1) has five subunits: alpha(3), beta(3), gamma(1), delta(1), epsilon(1). CF(0) has three main subunits: a(1), b(2) and c(9-12). The alpha and beta chains form an alternating ring which encloses part of the gamma chain. CF(1) is attached to CF(0) by a central stalk formed by the gamma and epsilon chains, while a peripheral stalk is formed by the delta and b chains.

It localises to the cell inner membrane. It carries out the reaction ATP + H2O + 4 H(+)(in) = ADP + phosphate + 5 H(+)(out). Functionally, produces ATP from ADP in the presence of a proton gradient across the membrane. The catalytic sites are hosted primarily by the beta subunits. In Ralstonia nicotianae (strain ATCC BAA-1114 / GMI1000) (Ralstonia solanacearum), this protein is ATP synthase subunit beta.